The sequence spans 266 residues: Undecaprenyl-diphosphatase (266 aa).

8 helical membrane passes run 4-24 (WLIA…PVSS), 46-66 (VLIQ…RLWG), 82-102 (IGIL…HDFI), 105-125 (VLYE…FILL), 142-162 (YPLK…VPGV), 182-202 (AAEF…AYDL), 216-236 (LIGI…KTVL), and 244-264 (FAPF…LLYI).

The protein belongs to the UppP family.

Its subcellular location is the cell inner membrane. It catalyses the reaction di-trans,octa-cis-undecaprenyl diphosphate + H2O = di-trans,octa-cis-undecaprenyl phosphate + phosphate + H(+). Its function is as follows. Catalyzes the dephosphorylation of undecaprenyl diphosphate (UPP). Confers resistance to bacitracin. This Caulobacter vibrioides (strain ATCC 19089 / CIP 103742 / CB 15) (Caulobacter crescentus) protein is Undecaprenyl-diphosphatase.